Reading from the N-terminus, the 275-residue chain is Transmembrane protein 45B (275 aa).

Helical transmembrane passes span 7-27 (HALP…KYPL), 47-67 (IVEA…EQFV), 94-114 (LFFA…HVPL), 116-136 (VDRL…YYHV), 146-166 (IHSL…LEVI), 180-200 (LIIL…PPFG), and 212-232 (LMFI…IVAV). Residues serine 270 and serine 272 each carry the phosphoserine modification.

Belongs to the TMEM45 family. In terms of assembly, (Microbial infection) Interacts with sindbis virus nsP1 and nsP4; these interactions lead to viral RNA replication inhibition. As to quaternary structure, (Microbial infection) Interacts with chikungunya virus nsP1 and nsP4; these interactions lead to viral RNA replication inhibition.

It is found in the endosome membrane. The protein localises to the lysosome membrane. Its subcellular location is the golgi apparatus. It localises to the trans-Golgi network membrane. In terms of biological role, plays a role in innate immunity. Mechanistically, promotes alphaviruses RNA degradation by interacting with the viral polymerase nsP4 and the mRNA-capping enzyme nsP1 and thereby interfering with the interaction between viral RNA and nsP1. In Homo sapiens (Human), this protein is Transmembrane protein 45B (TMEM45B).